Reading from the N-terminus, the 689-residue chain is Glycine--tRNA ligase beta subunit (689 aa).

Belongs to the class-II aminoacyl-tRNA synthetase family. In terms of assembly, tetramer of two alpha and two beta subunits.

The protein localises to the cytoplasm. The enzyme catalyses tRNA(Gly) + glycine + ATP = glycyl-tRNA(Gly) + AMP + diphosphate. This Coxiella burnetii (strain RSA 493 / Nine Mile phase I) protein is Glycine--tRNA ligase beta subunit (glyS).